The primary structure comprises 837 residues: Phenylalanine--tRNA ligase beta subunit (837 aa).

A tRNA-binding domain is found at 39–149; the sequence is SASLEGIVTG…EMNIAIPKIG (111 aa). One can recognise a B5 domain in the interval 415 to 520; that stretch reads IEEQLLLLRR…RLIGYDRFDS (106 aa). 4 residues coordinate Mg(2+): aspartate 498, aspartate 504, glutamate 507, and glutamate 508. In terms of domain architecture, FDX-ACB spans 743–836; that stretch reads PTVPSMERDI…LKVEFSAELR (94 aa).

It belongs to the phenylalanyl-tRNA synthetase beta subunit family. Type 1 subfamily. Tetramer of two alpha and two beta subunits. It depends on Mg(2+) as a cofactor.

Its subcellular location is the cytoplasm. It catalyses the reaction tRNA(Phe) + L-phenylalanine + ATP = L-phenylalanyl-tRNA(Phe) + AMP + diphosphate + H(+). In Prochlorococcus marinus (strain SARG / CCMP1375 / SS120), this protein is Phenylalanine--tRNA ligase beta subunit.